Here is a 369-residue protein sequence, read N- to C-terminus: 4-hydroxy-3-methylbut-2-en-1-yl diphosphate synthase (flavodoxin) (369 aa).

The [4Fe-4S] cluster site is built by C270, C273, C305, and E312.

This sequence belongs to the IspG family. [4Fe-4S] cluster serves as cofactor.

It catalyses the reaction (2E)-4-hydroxy-3-methylbut-2-enyl diphosphate + oxidized [flavodoxin] + H2O + 2 H(+) = 2-C-methyl-D-erythritol 2,4-cyclic diphosphate + reduced [flavodoxin]. It functions in the pathway isoprenoid biosynthesis; isopentenyl diphosphate biosynthesis via DXP pathway; isopentenyl diphosphate from 1-deoxy-D-xylulose 5-phosphate: step 5/6. Its function is as follows. Converts 2C-methyl-D-erythritol 2,4-cyclodiphosphate (ME-2,4cPP) into 1-hydroxy-2-methyl-2-(E)-butenyl 4-diphosphate. In Pseudomonas putida (strain W619), this protein is 4-hydroxy-3-methylbut-2-en-1-yl diphosphate synthase (flavodoxin).